Here is a 14507-residue protein sequence, read N- to C-terminus: Mucin-16 (14507 aa).

Residues 1–17 (MLKPSGLPGSSSPTRSL) are compositionally biased toward low complexity. Positions 1-138 (MLKPSGLPGS…PRTRTSSTEG (138 aa)) are disordered. At 1-14451 (MLKPSGLPGS…EPLTGNSDLP (14451 aa)) the chain is on the extracellular side. 2 stretches are compositionally biased toward polar residues: residues 35–46 (TGATLSPKTSTG) and 56–138 (PFTS…STEG). N-linked (GlcNAc...) asparagine glycosylation occurs at Asn139. 7 disordered regions span residues 160-180 (EKYT…ETPW), 198-229 (DSTA…TNPS), 265-287 (FSSP…LSSS), 396-554 (LGGT…STSV), 655-674 (VSKT…SYTM), 695-719 (SLGL…GHTK), and 740-888 (TSTF…RTTL). Low complexity predominate over residues 166–178 (TETSTTEGDSTET). Polar residues predominate over residues 212 to 229 (PAETTVTDSHTPGRTNPS). Composition is skewed to low complexity over residues 276 to 287 (SRISTSAPLSSS) and 396 to 413 (LGGT…STTL). Polar residues-rich tracts occupy residues 414–423 (VSEETNTHHS), 431–441 (GTLNTSMTPLE), and 460–478 (GFTT…SSSH). Asn434 is a glycosylation site (N-linked (GlcNAc...) asparagine). 2 stretches are compositionally biased toward low complexity: residues 485–497 (TTGS…SSST) and 508–525 (ATTS…ESTA). The span at 526 to 543 (QQFSEPQHTQWVETSPSM) shows a compositional bias: polar residues. Polar residues-rich tracts occupy residues 696-706 (LGLTPLNTRHP), 740-780 (TSTF…NAAT), 787-796 (NATSPLTHPS), and 805-821 (SVLT…SPNI). An N-linked (GlcNAc...) asparagine glycan is attached at Asn787. Residues 823–846 (PTGTLTSESSESPSTLSLPSVSGV) are compositionally biased toward low complexity. Polar residues-rich tracts occupy residues 847-860 (KTTF…THLF) and 869-888 (TSNP…RTTL). Asn930 and Asn957 each carry an N-linked (GlcNAc...) asparagine glycan. Polar residues-rich tracts occupy residues 949 to 969 (SQTN…TWPE), 1092 to 1101 (GSSTPGRTSQ), 1124 to 1137 (GTSS…TATH), and 1301 to 1317 (SGSS…NTGS). Disordered regions lie at residues 949 to 981 (SQTN…LPSA), 1082 to 1101 (VSPS…RTSQ), 1121 to 1149 (PRDG…ARST), 1301 to 1378 (SGSS…NLTS), 1593 to 1641 (LGTQ…SSSS), and 1704 to 1757 (LSES…SPTT). Positions 1318-1328 (TWDPTTYITTT) are enriched in low complexity. Composition is skewed to polar residues over residues 1334-1347 (SSAQ…VRTL), 1368-1378 (PKISSSPNLTS), 1596-1613 (QGRS…STDT), 1621-1633 (GPTN…PMDN), and 1704-1745 (LSES…GSQM). An N-linked (GlcNAc...) asparagine glycan is attached at Asn1375. A glycan (N-linked (GlcNAc...) asparagine) is linked at Asn1633. Over residues 1746–1757 (STSIPLTSSPTT) the composition is skewed to low complexity. 3 N-linked (GlcNAc...) asparagine glycosylation sites follow: Asn1840, Asn1877, and Asn1890. The segment covering 1846–1908 (DLSHGVHTSS…TEKSEVSSSI (63 aa)) has biased composition (polar residues). Disordered regions lie at residues 1846 to 1930 (DLSH…PGNR), 2010 to 2033 (VSAS…YSSA), 2064 to 2140 (WPST…GASI), and 2153 to 2177 (RSDV…SAGT). Composition is skewed to low complexity over residues 2019-2033 (SVSS…YSSA) and 2064-2085 (WPST…NPSS). Over residues 2111–2132 (HGPQNTAASTLNTDASSVTGLS) the composition is skewed to polar residues. N-linked (GlcNAc...) asparagine glycans are attached at residues Asn2345 and Asn2375. 2 disordered regions span residues 2393–2455 (PTSI…PFTI) and 2566–2591 (SESK…ETSA). Low complexity-rich tracts occupy residues 2417–2429 (TSTT…TSPS) and 2566–2583 (SESK…TPTS). Residue Asn2737 is glycosylated (N-linked (GlcNAc...) asparagine). Disordered stretches follow at residues 2789-2822 (TTGS…LTMN), 2838-2885 (TATQ…TWGI), 2901-3006 (DTKS…AMTS), 3019-3052 (TGQA…TSRK), 3083-3148 (TLNM…ASSI), 3172-3235 (SQAA…PETT), 3251-3276 (ALGS…PTEN), 3299-3392 (GTPG…KTET), 3415-3436 (TSRS…TSGS), and 3462-3491 (VSLP…VTSP). Residues 2803–2819 (SGSTHSTGTKTFSSLPL) are compositionally biased toward polar residues. Positions 2864–2875 (SASSSPSKAFAS) are enriched in low complexity. Polar residues-rich tracts occupy residues 2876–2885 (LTTAPPTWGI) and 2901–2918 (DTKS…NTIP). Low complexity predominate over residues 2919 to 2931 (DSDASTASSSLSK). A compositionally biased stretch (polar residues) spans 2942–2968 (MTSTKAISASSFQSTGFTETPEGSASP). Residues 3019-3035 (TGQAARSGSSSSPISLS) show a composition bias toward low complexity. The segment covering 3041 to 3052 (SFLSPTASTSRK) has biased composition (polar residues). An N-linked (GlcNAc...) asparagine glycan is attached at Asn3085. Over residues 3107–3116 (TAETQTLTFT) the composition is skewed to low complexity. 2 stretches are compositionally biased toward polar residues: residues 3117–3132 (PSET…SPTE) and 3172–3181 (SQAAQGNSTW). Residue Asn3178 is glycosylated (N-linked (GlcNAc...) asparagine). The segment covering 3188 to 3200 (TGSSPAGTSPGSP) has biased composition (low complexity). 2 stretches are compositionally biased toward polar residues: residues 3201 to 3214 (EMST…SKEP) and 3251 to 3261 (ALGSGSTSISH). Residues 3263–3274 (PTGTTSPTKSPT) are compositionally biased toward low complexity. 2 stretches are compositionally biased toward polar residues: residues 3299–3342 (GTPG…TTGM) and 3360–3383 (VSLS…SSLT). Composition is skewed to low complexity over residues 3424–3436 (SSTS…TSGS) and 3477–3491 (PSGG…VTSP). An N-linked (GlcNAc...) asparagine glycan is attached at Asn3501. Residues 3538-3555 (ISTTITTMGTNSISTTTP) are compositionally biased toward low complexity. 8 disordered regions span residues 3538 to 3588 (ISTT…STAA), 3644 to 3672 (TPSS…TAST), 3794 to 3829 (RSSG…GQVP), 3843 to 3879 (AKTP…TPSA), 3914 to 3982 (LESG…SPVV), 4024 to 4056 (MDTS…SSKR), 4094 to 4121 (AMQT…WTGT), and 4138 to 4166 (FSKG…VPIH). Composition is skewed to polar residues over residues 3812-3824 (QTST…TSAH) and 3848-3868 (ATFQ…TSDS). Residues 3916-3927 (SGTTSSPSWKSS) are compositionally biased toward low complexity. The span at 3946–3982 (PSTNTVETTGWVTSSEHASHSTIPAHSASSKLTSPVV) shows a compositional bias: polar residues. Low complexity predominate over residues 4026-4041 (TSSTTQTSIISSPGST). A compositionally biased stretch (polar residues) spans 4095-4121 (MQTSPPGATSLSAPTLDTSATASWTGT). A compositionally biased stretch (low complexity) spans 4152 to 4164 (SVEETSSSSSLVP). N-linked (GlcNAc...) asparagine glycosylation is found at Asn4220, Asn4498, Asn4606, Asn4613, and Asn4624. Disordered stretches follow at residues 4728 to 4748 (VKDV…PSSQ), 4845 to 4961 (HSTV…TRLS), and 5026 to 5066 (VSWT…KLSS). Positions 4856–4876 (KVTSPNVTTSTMEDTTISRSI) are enriched in polar residues. Asn4861 carries an N-linked (GlcNAc...) asparagine glycan. 2 stretches are compositionally biased toward low complexity: residues 4877–4914 (PKSS…ETST) and 4924–4939 (TTEV…SSTS). Composition is skewed to polar residues over residues 4944 to 4961 (DQST…TRLS) and 5026 to 5037 (VSWTSPPSVDKT). The span at 5038–5047 (SSPSSFLSSP) shows a compositional bias: low complexity. Positions 5048–5059 (AMTTPSLISSTL) are enriched in polar residues. Asn5096, Asn5131, and Asn5228 each carry an N-linked (GlcNAc...) asparagine glycan. Disordered regions lie at residues 5128–5149 (VKAN…ETPK), 5221–5249 (EVSS…DTFT), and 5271–5303 (TQAS…TVTQ). The span at 5221-5234 (EVSSTGVNSSSKIS) shows a compositional bias: polar residues. The span at 5280-5293 (SHSTLPLDTSTTLS) shows a compositional bias: low complexity. Residues 5294 to 5303 (QGGTHSTVTQ) show a composition bias toward polar residues. An N-linked (GlcNAc...) asparagine glycan is attached at Asn5320. 7 disordered regions span residues 5328–5365 (PVEE…PLPV), 5381–5400 (GTTS…SITH), 5426–5507 (NVGT…TNTA), 5519–5538 (ASRT…DRPT), 5624–5654 (PVEE…ESIP), 5675–5696 (LGTT…PTQE), and 5727–5747 (ISGH…KATS). 2 stretches are compositionally biased toward low complexity: residues 5333 to 5365 (SSVS…PLPV) and 5381 to 5393 (GTTS…SSPP). Asn5394 carries an N-linked (GlcNAc...) asparagine glycan. Polar residues-rich tracts occupy residues 5426–5441 (NVGT…SSVL) and 5447–5485 (SKAT…TASL). An N-linked (GlcNAc...) asparagine glycan is attached at Asn5470. 4 stretches are compositionally biased toward low complexity: residues 5495–5504 (SEKTSSTTET), 5520–5532 (SRTE…TSIS), 5633–5654 (SLMS…ESIP), and 5675–5688 (LGTT…SSPP). Asn5689 is a glycosylation site (N-linked (GlcNAc...) asparagine). The span at 5727–5737 (ISGHESQSSVP) shows a compositional bias: polar residues. N-linked (GlcNAc...) asparagine glycosylation is present at Asn5863. 2 disordered regions span residues 5882–5931 (STAS…SSPV) and 6054–6078 (STST…TPEL). Positions 5903–5916 (TTTMSRSTKGVSWQ) are enriched in polar residues. Low complexity predominate over residues 5917–5928 (SPPSVEETSSPS). Over residues 6054–6063 (STSTPGSPET) the composition is skewed to polar residues. N-linked (GlcNAc...) asparagine glycosylation occurs at Asn6088. Disordered regions lie at residues 6122-6149 (PASA…PLTI), 6219-6251 (NSLS…LVSV), 6399-6425 (SRTE…DTST), 6438-6459 (TKSE…SQGT), 6497-6545 (ISGT…TSLP), and 6682-6714 (TTGA…PDIS). 3 stretches are compositionally biased toward low complexity: residues 6134–6149 (SPEA…PLTI), 6226–6251 (PLLV…LVSV), and 6399–6410 (SRTELTSSSRTS). Polar residues-rich tracts occupy residues 6411-6425 (IQGT…DTST) and 6445-6459 (IATQ…SQGT). Positions 6500 to 6523 (TSPPSVEKTSSSSSLLSLPAITSP) are enriched in low complexity. 2 stretches are compositionally biased toward polar residues: residues 6530–6545 (LPES…TSLP) and 6683–6699 (TGAT…SRRT). The N-linked (GlcNAc...) asparagine glycan is linked to Asn6732. 3 disordered regions span residues 6800-6822 (SFSS…TLPK), 6845-6865 (TLGT…STSH), and 6886-6939 (TAAT…SETT). The segment covering 6848–6864 (TSPEPTTSSPPNLSSTS) has biased composition (low complexity). Asn6859 carries an N-linked (GlcNAc...) asparagine glycan. Residues 6886–6905 (TAATNVETTSSGHGSQSSVL) show a composition bias toward polar residues. Positions 6919–6938 (TTSTMGHTTVSTSMSVSSET) are enriched in low complexity. Residue Asn6961 is glycosylated (N-linked (GlcNAc...) asparagine). Disordered stretches follow at residues 6981–7004 (AEVS…QSTV), 7028–7107 (MTIP…ATTS), 7143–7208 (TSPE…TSKA), 7279–7302 (SRTE…MLPE), 7320–7345 (ESSE…TLDT), 7360–7427 (QRLP…SLLT), 7437–7456 (LDAS…STSV), 7463–7503 (EVTT…ETTK), 7527–7553 (SNTR…SEET), 7577–7597 (TEAI…TMSQ), 7726–7782 (ATTT…TTSS), 7825–7849 (LASS…TKMS), 7908–7927 (HTSP…TSST), and 7970–8000 (PSFS…SPLP). Residues 7028–7038 (MTIPTQTGPSG) are compositionally biased toward polar residues. Residues 7039–7055 (STSQDTLTLDTSTTKSQ) are compositionally biased toward low complexity. Residues 7057–7075 (KTHSTLTQRFPHSEMTTLM) show a composition bias toward polar residues. The segment covering 7086 to 7105 (SSPSLENPSSLPSLLSLPAT) has biased composition (low complexity). Residues 7166 to 7200 (GKDTTNTEAVHPSTNTAASNVEIPSSGHESPSSAL) show a composition bias toward polar residues. A compositionally biased stretch (low complexity) spans 7279–7298 (SRTEVTSSSRTSISGSAEST). Composition is skewed to polar residues over residues 7322-7345 (SEMT…TLDT), 7360-7371 (QRLPHSEITTLV), and 7390-7402 (SPPS…SAMI). Low complexity-rich tracts occupy residues 7403–7427 (SPSP…SLLT) and 7439–7455 (ASAE…SSTS). The span at 7474–7484 (FSNTAVTKVGT) shows a compositional bias: polar residues. The span at 7485–7494 (SSSGHESPSS) shows a compositional bias: low complexity. The span at 7733-7749 (GTSTEPGTSSSSSLSTT) shows a compositional bias: low complexity. A compositionally biased stretch (basic and acidic residues) spans 7750-7765 (SHERLTTYKDTAHTEA). A compositionally biased stretch (polar residues) spans 7768 to 7782 (PSTNTGGTNVATTSS). 3 stretches are compositionally biased toward low complexity: residues 7835-7846 (ESSGSEGTSSGT), 7915-7927 (TTQG…TSST), and 7973-8000 (SLMS…SPLP). Asn8029 and Asn8055 each carry an N-linked (GlcNAc...) asparagine glycan. Disordered regions lie at residues 8042–8078 (EVTT…LADS), 8111–8134 (IQTE…GTSL), 8312–8331 (GISR…TSHE), 8342–8389 (TEDM…YTMG), 8411–8472 (TSSL…ISPD), 8604–8624 (MLRT…STSA), 8674–8741 (SPMA…TKVS), and 8775–8880 (TPLT…HSSP). Residues 8052–8078 (PSSNRTVTDVGTSSSGHESTSFVLADS) show a composition bias toward polar residues. Positions 8319 to 8328 (TSSTSNLSST) are enriched in low complexity. Residue Asn8324 is glycosylated (N-linked (GlcNAc...) asparagine). Residues 8345-8389 (MQPSTHTAVTNVRTSISGHESQSSVLSDSETPKATSPMGTTYTMG) show a composition bias toward polar residues. The segment covering 8607–8624 (TSSEPETSSPPNLSSTSA) has biased composition (low complexity). N-linked (GlcNAc...) asparagine glycans are attached at residues Asn8618 and Asn8684. 2 stretches are compositionally biased toward polar residues: residues 8674 to 8740 (SPMA…TTKV) and 8781 to 8810 (GSAE…SSRA). The span at 8850–8880 (TSPPSSLVSLSAVTSPSPLYSTPSESSHSSP) shows a compositional bias: low complexity. The N-linked (GlcNAc...) asparagine glycan is linked to Asn8913. Disordered stretches follow at residues 8995–9018 (ESTS…SATK) and 9147–9168 (SLSS…DSIH). Asn9202 carries an N-linked (GlcNAc...) asparagine glycan. The segment covering 9294–9307 (SISEETSSATEKST) has biased composition (low complexity). The tract at residues 9294-9460 (SISEETSSAT…TPSGSSHSSP (167 aa)) is disordered. Composition is skewed to polar residues over residues 9308-9357 (VLSS…STPL) and 9374-9412 (SGAT…TTPM). Over residues 9431–9460 (SPPSSLVSSSSVTSPSPLYSTPSGSSHSSP) the composition is skewed to low complexity. Asn9493 is a glycosylation site (N-linked (GlcNAc...) asparagine). 4 disordered regions span residues 9611–9635 (ATPE…AQST), 9726–9753 (SSSS…SPSS), 9771–9791 (VLDT…STSV), and 9869–9890 (TEPT…ETTS). Residues 9621 to 9635 (MPSSRTSIPGPAQST) show a composition bias toward polar residues. Low complexity-rich tracts occupy residues 9774–9790 (TSSE…SSTS) and 9881–9890 (ETSTSEETTS). N-linked (GlcNAc...) asparagine glycosylation is present at Asn9785. Residues Asn10075 and Asn10173 are each glycosylated (N-linked (GlcNAc...) asparagine). 2 disordered regions span residues 10175–10218 (SLDT…PPAS) and 10445–10469 (TIRP…TGGT). Residues 10178-10193 (TSSVTPTNTPSSPGST) are compositionally biased toward low complexity. A compositionally biased stretch (polar residues) spans 10194-10212 (HLLQSSKTDFTSSAKTSSP). N-linked (GlcNAc...) asparagine glycosylation occurs at Asn10510. Residues 10544 to 10573 (SLGAETSTALPRTTPSVFNRESETTASLVS) are compositionally biased toward polar residues. Disordered regions lie at residues 10544–10590 (SLGA…DVSS) and 10689–10719 (ETSS…PGAE). N-linked (GlcNAc...) asparagine glycosylation occurs at Asn10700. The segment covering 10708-10719 (ATPSIATSPGAE) has biased composition (polar residues). Asn10749 carries an N-linked (GlcNAc...) asparagine glycan. The segment covering 10849–10860 (TTPSMTTSHGAE) has biased composition (polar residues). Disordered stretches follow at residues 10849–10872 (TTPS…TVST), 10898–10926 (LSPG…TPTV), and 11003–11036 (LPTL…TVSP). Residues 10861-10872 (SSSAVPTPTVST) are compositionally biased toward low complexity. Over residues 11003-11018 (LPTLTLSPGEPETTPS) the composition is skewed to low complexity. An N-linked (GlcNAc...) asparagine glycan is attached at Asn11053. Positions 11072–11092 (SMATSHGAEASSAVPTPTVSP) are disordered. Asn11224 and Asn11263 each carry an N-linked (GlcNAc...) asparagine glycan. 2 stretches are compositionally biased toward polar residues: residues 11269-11284 (HPAE…TSRF) and 11358-11381 (STTV…SIAT). Disordered stretches follow at residues 11269–11301 (HPAE…SPEA), 11358–11400 (STTV…SPDV), 11508–11537 (KFSH…STTT), 11583–11724 (ETST…TSPR), 11836–11861 (SPTA…TSTM), and 11913–11937 (QTVT…FSRT). A glycan (N-linked (GlcNAc...) asparagine) is linked at Asn11367. Composition is skewed to polar residues over residues 11583–11594 (ETSTTVSGTIPN), 11631–11651 (VTSQ…TLTP), and 11658–11672 (TTAS…QTGF). A glycan (N-linked (GlcNAc...) asparagine) is linked at Asn11594. Over residues 11700–11717 (PVSRTTSSFSHSSPDATP) the composition is skewed to low complexity. Composition is skewed to polar residues over residues 11849 to 11861 (PLST…TSTM) and 11913 to 11928 (QTVT…SVTS). 12 repeat units span residues 12067–12223 (AATV…PSPT), 12224–12381 (TAGP…PTIM), 12382–12537 (AAGP…PSPA), 12538–12692 (TAGP…PSPT), 12693–12848 (TAGP…PSPT), 12849–13004 (SAGP…PSPT), 13005–13160 (TAVP…PSPT), 13161–13316 (TTGP…PGPT), 13317–13472 (ATGP…SGPM), 13473–13628 (TASP…PGPS), 13629–13784 (AASP…FGPS), and 13785–13939 (AASH…RYMA). A 12 X approximate tandem repeats region spans residues 12067-13939 (AATVPFMVPF…FTINNLRYMA (1873 aa)). The 122-residue stretch at 12072 to 12193 (FMVPFTLNFT…NSLYVNGFTH (122 aa)) folds into the SEA 1 domain. N-linked (GlcNAc...) asparagine glycans are attached at residues Asn12079, Asn12100, and Asn12116. Cys12126 and Cys12146 are disulfide-bonded. A glycan (N-linked (GlcNAc...) asparagine) is linked at Asn12168. A disordered region spans residues 12196 to 12226 (SMPTTSTPGTSTVDVGTSGTPSSSPSPTTAG). The SEA 2 domain maps to 12228-12349 (LLMPFTLNFT…NSLYVNGFTH (122 aa)). Residues Asn12235 and Asn12272 are each glycosylated (N-linked (GlcNAc...) asparagine). Cys12282 and Cys12302 are oxidised to a cystine. The disordered stretch occupies residues 12353–12376 (VSTTSTPGTSTVDLRTSGTPSSLS). 3 SEA domains span residues 12386-12507 (LLVP…GFTH), 12542-12663 (LLVL…GFTH), and 12697-12818 (LLVP…GFTH). N-linked (GlcNAc...) asparagine glycosylation is found at Asn12393, Asn12414, and Asn12430. Residues Cys12440 and Cys12460 are joined by a disulfide bond. Asn12549, Asn12570, and Asn12586 each carry an N-linked (GlcNAc...) asparagine glycan. The cysteines at positions 12596 and 12616 are disulfide-linked. Residues Asn12704, Asn12725, and Asn12741 are each glycosylated (N-linked (GlcNAc...) asparagine). Cys12751 and Cys12771 are joined by a disulfide. Positions 12819 to 12834 (QTSAPNTSTPGTSTVD) are enriched in polar residues. Positions 12819-12849 (QTSAPNTSTPGTSTVDLGTSGTPSSLPSPTS) are disordered. The N-linked (GlcNAc...) asparagine glycan is linked to Asn12824. The segment covering 12835-12849 (LGTSGTPSSLPSPTS) has biased composition (low complexity). Positions 12853-12974 (LLVPFTLNFT…NSLYVNGFTH (122 aa)) constitute an SEA 6 domain. Asn12860, Asn12881, and Asn12897 each carry an N-linked (GlcNAc...) asparagine glycan. The cysteines at positions 12907 and 12927 are disulfide-linked. Residues 12978-12990 (VAPTSTPGTSTVD) are compositionally biased toward polar residues. The disordered stretch occupies residues 12978–13003 (VAPTSTPGTSTVDLGTSGTPSSLPSP). The segment covering 12991-13003 (LGTSGTPSSLPSP) has biased composition (low complexity). 2 SEA domains span residues 13009-13130 (LLVP…GFTH) and 13165-13286 (LLVP…GFTQ). Residues Asn13016, Asn13037, and Asn13053 are each glycosylated (N-linked (GlcNAc...) asparagine). A disulfide bridge connects residues Cys13063 and Cys13083. Asn13172 and Asn13193 each carry an N-linked (GlcNAc...) asparagine glycan. Cys13219 and Cys13239 are joined by a disulfide. The segment covering 13291 to 13313 (PTTSTPGTFTVQPETSETPSSLP) has biased composition (polar residues). A disordered region spans residues 13291–13317 (PTTSTPGTFTVQPETSETPSSLPGPTA). SEA domains follow at residues 13321–13442 (VLLP…GFTH) and 13477–13598 (LLVL…GFTQ). Residues Asn13328, Asn13349, and Asn13365 are each glycosylated (N-linked (GlcNAc...) asparagine). A disulfide bond links Cys13375 and Cys13395. N-linked (GlcNAc...) asparagine glycans are attached at residues Asn13484, Asn13505, and Asn13521. Cys13531 and Cys13551 are oxidised to a cystine. Over residues 13603 to 13621 (PTTSIPGTPTVDLGTSGTP) the composition is skewed to polar residues. Residues 13603–13625 (PTTSIPGTPTVDLGTSGTPVSKP) are disordered. 4 SEA domains span residues 13633–13754 (LLVL…GFTH), 13789–13909 (LLIL…GFTH), 13922–14043 (SEEP…GYNE), and 14073–14193 (HLKT…GYAP). Asn13640 and Asn13661 each carry an N-linked (GlcNAc...) asparagine glycan. A disulfide bond links Cys13687 and Cys13707. Asn13733, Asn13744, Asn13796, Asn13816, Asn13832, Asn13929, and Asn13950 each carry an N-linked (GlcNAc...) asparagine glycan. Residues Cys13976 and Cys13996 are joined by a disulfide bond. N-linked (GlcNAc...) asparagine glycans are attached at residues Asn14080 and Asn14100. Cysteines 14126 and 14146 form a disulfide. Asn14195, Asn14212, Asn14254, Asn14287, Asn14326, and Asn14363 each carry an N-linked (GlcNAc...) asparagine glycan. SEA domains are found at residues 14198-14309 (IRGE…EMES) and 14319-14438 (STQH…GYSP). Residues Cys14373 and Cys14393 are joined by a disulfide bond. N-linked (GlcNAc...) asparagine glycans are attached at residues Asn14417 and Asn14423. Residues 14452-14472 (FWAVILIGLAGLLGVITCLIC) form a helical membrane-spanning segment. Over 14473-14507 (GVLVTTRRRKKEGEYNVQQQCPGYYQSHLDLEDLQ) the chain is Cytoplasmic.

As to quaternary structure, binds to MSLN. Binding to MSLN mediates heterotypic cell adhesion. This may contribute to the metastasis of ovarian cancer to the peritoneum by initiating cell attachment to the mesothelial epithelium via binding to MSLN. In terms of processing, heavily O-glycosylated; expresses both type 1 and type 2 core glycans. Post-translationally, heavily N-glycosylated; expresses primarily high mannose and complex bisecting type N-linked glycans. May be phosphorylated. Phosphorylation of the intracellular C-terminal domain may induce proteolytic cleavage and the liberation of the extracellular domain into the extracellular space. In terms of processing, may contain numerous disulfide bridges. Association of several molecules of the secreted form may occur through interchain disulfide bridges providing an extraordinarily large gel-like matrix in the extracellular space or in the lumen of secretory ducts. Expressed in corneal and conjunctival epithelia (at protein level). Overexpressed in ovarian carcinomas and ovarian low malignant potential (LMP) tumors as compared to the expression in normal ovarian tissue and ovarian adenomas.

It localises to the cell membrane. It is found in the secreted. Its subcellular location is the extracellular space. Functionally, thought to provide a protective, lubricating barrier against particles and infectious agents at mucosal surfaces. The polypeptide is Mucin-16 (Homo sapiens (Human)).